The chain runs to 473 residues: 7-dehydrocholesterol reductase (473 aa).

The interval Met-1–Glu-20 is disordered. A run of 6 helical transmembrane segments spans residues Phe-36–Val-56, Ile-97–His-117, Trp-175–Val-195, Val-264–Trp-284, Leu-304–Val-324, and Glu-329–Phe-349. NADP(+) contacts are provided by residues Lys-356, Arg-360, Met-393, Trp-398, and Asn-405–Tyr-406. Residues Ala-419–Val-439 form a helical membrane-spanning segment. Residues Asp-445, Cys-449–Tyr-453, and Tyr-460 contribute to the NADP(+) site.

The protein belongs to the ERG4/ERG24 family.

The protein resides in the endoplasmic reticulum membrane. It catalyses the reaction cholesterol + NADP(+) = 7-dehydrocholesterol + NADPH + H(+). The enzyme catalyses 7-dehydrodesmosterol + NADPH + H(+) = desmosterol + NADP(+). The protein operates within steroid biosynthesis; cholesterol biosynthesis. Functionally, catalyzes the last step of the cholesterol synthesis pathway, which transforms cholesta-5,7-dien-3beta-ol (7-dehydrocholesterol,7-DHC) into cholesterol by reducing the C7-C8 double bond of its sterol core. Can also metabolize cholesta-5,7,24-trien-3beta-ol (7-dehydrodemosterol, 7-DHD) to desmosterol, which is then metabolized by the Delta(24)-sterol reductase (DHCR24) to cholesterol. Modulates ferroptosis (a form of regulated cell death driven by iron-dependent lipid peroxidation) through the metabolic breakdown of the anti-ferroptotic metabolites 7-DHC and 7-DHD which, when accumulated, divert the propagation of peroxyl radical-mediated damage from phospholipid components to its sterol core, protecting plasma and mitochondrial membranes from phospholipid autoxidation. This is 7-dehydrocholesterol reductase (dhcr7) from Xenopus laevis (African clawed frog).